The sequence spans 299 residues: ATP phosphoribosyltransferase (299 aa).

Belongs to the ATP phosphoribosyltransferase family. Long subfamily. The cofactor is Mg(2+).

The protein resides in the cytoplasm. It carries out the reaction 1-(5-phospho-beta-D-ribosyl)-ATP + diphosphate = 5-phospho-alpha-D-ribose 1-diphosphate + ATP. It participates in amino-acid biosynthesis; L-histidine biosynthesis; L-histidine from 5-phospho-alpha-D-ribose 1-diphosphate: step 1/9. With respect to regulation, feedback inhibited by histidine. In terms of biological role, catalyzes the condensation of ATP and 5-phosphoribose 1-diphosphate to form N'-(5'-phosphoribosyl)-ATP (PR-ATP). Has a crucial role in the pathway because the rate of histidine biosynthesis seems to be controlled primarily by regulation of HisG enzymatic activity. In Shewanella pealeana (strain ATCC 700345 / ANG-SQ1), this protein is ATP phosphoribosyltransferase.